Here is a 339-residue protein sequence, read N- to C-terminus: Phosphate acyltransferase (339 aa).

This sequence belongs to the PlsX family. In terms of assembly, homodimer. Probably interacts with PlsY.

It localises to the cytoplasm. The enzyme catalyses a fatty acyl-[ACP] + phosphate = an acyl phosphate + holo-[ACP]. Its pathway is lipid metabolism; phospholipid metabolism. Functionally, catalyzes the reversible formation of acyl-phosphate (acyl-PO(4)) from acyl-[acyl-carrier-protein] (acyl-ACP). This enzyme utilizes acyl-ACP as fatty acyl donor, but not acyl-CoA. In Acetivibrio thermocellus (strain ATCC 27405 / DSM 1237 / JCM 9322 / NBRC 103400 / NCIMB 10682 / NRRL B-4536 / VPI 7372) (Clostridium thermocellum), this protein is Phosphate acyltransferase.